The primary structure comprises 131 residues: (R)-mandelonitrile lyase (131 aa).

The Cupin type-2 domain occupies V42–M104. Mn(2+) is bound by residues H53, H55, Q59, H94, and H96.

It belongs to the cupin domain-containing hydroxynitrile lyase family. The cofactor is Mn(2+).

The catalysed reaction is (R)-mandelonitrile = benzaldehyde + hydrogen cyanide. Its function is as follows. Hydroxynitrile lyase which catalyzes mandelonitrile formation from benzaldehyde and hydrogen cyanide with high stereoselectivity in presence of manganese. This is (R)-mandelonitrile lyase from Granulicella tundricola (strain ATCC BAA-1859 / DSM 23138 / MP5ACTX9).